The following is a 274-amino-acid chain: Penicillin-insensitive murein endopeptidase (274 aa).

Positions Met1–Ala19 are cleaved as a signal peptide. 3 disulfide bridges follow: Cys44–Cys265, Cys187–Cys235, and Cys216–Cys223. Zn(2+) contacts are provided by His110, His113, Asp120, Asp147, His150, and His211.

This sequence belongs to the peptidase M74 family. Dimer. Zn(2+) serves as cofactor.

It is found in the periplasm. In terms of biological role, murein endopeptidase that cleaves the D-alanyl-meso-2,6-diamino-pimelyl amide bond that connects peptidoglycan strands. Likely plays a role in the removal of murein from the sacculus. The polypeptide is Penicillin-insensitive murein endopeptidase (Shigella sonnei (strain Ss046)).